We begin with the raw amino-acid sequence, 769 residues long: Calcium up-regulated protein F (769 aa).

The tract at residues 1 to 21 (MINIKDISKSSNQSEEKSLKG) is disordered. Ricin B-type lectin domains are found at residues 25 to 145 (KTKY…WTTF) and 116 to 249 (QGNG…WGIN).

Belongs to the cup family.

The protein localises to the cytoplasm. It localises to the membrane. Its function is as follows. May play an important role in stabilizing and/or regulating the cell membrane during Ca(2+) stress or certain stages of development. This chain is Calcium up-regulated protein F (cupF), found in Dictyostelium discoideum (Social amoeba).